A 284-amino-acid chain; its full sequence is Bifunctional protein FolD (284 aa).

Residue 166 to 168 (GAS) coordinates NADP(+).

It belongs to the tetrahydrofolate dehydrogenase/cyclohydrolase family. As to quaternary structure, homodimer.

The catalysed reaction is (6R)-5,10-methylene-5,6,7,8-tetrahydrofolate + NADP(+) = (6R)-5,10-methenyltetrahydrofolate + NADPH. It catalyses the reaction (6R)-5,10-methenyltetrahydrofolate + H2O = (6R)-10-formyltetrahydrofolate + H(+). It functions in the pathway one-carbon metabolism; tetrahydrofolate interconversion. Functionally, catalyzes the oxidation of 5,10-methylenetetrahydrofolate to 5,10-methenyltetrahydrofolate and then the hydrolysis of 5,10-methenyltetrahydrofolate to 10-formyltetrahydrofolate. The sequence is that of Bifunctional protein FolD from Nitrosococcus oceani (strain ATCC 19707 / BCRC 17464 / JCM 30415 / NCIMB 11848 / C-107).